Reading from the N-terminus, the 214-residue chain is MTLGLVGRKVGMTRVFDEQGVSVPVTVLDMSANRVTQVKSKDTDGYTAVQVTFGQKKANRVNKAEAGHFAKAGVEAGRGLIEFALTEEKLAELKAGDEITVSMFEVGQLVDVTGISKGKGFSGTIKRHNFGAQRTSHGNSRSHRVPGSIGMAQDPGRVFPGKRMAGQYGNTKATVQKLEVVRVDAERQLLLVKGAVPGAVNSDVVVRPSVKVGA.

The tract at residues Gly131–Pro155 is disordered. At Gln153 the chain carries N5-methylglutamine.

This sequence belongs to the universal ribosomal protein uL3 family. As to quaternary structure, part of the 50S ribosomal subunit. Forms a cluster with proteins L14 and L19. Post-translationally, methylated by PrmB.

One of the primary rRNA binding proteins, it binds directly near the 3'-end of the 23S rRNA, where it nucleates assembly of the 50S subunit. The protein is Large ribosomal subunit protein uL3 of Neisseria meningitidis serogroup C (strain 053442).